Here is a 138-residue protein sequence, read N- to C-terminus: Small ribosomal subunit protein uS11c (138 aa).

The protein belongs to the universal ribosomal protein uS11 family. Part of the 30S ribosomal subunit.

The protein localises to the plastid. This Cuscuta gronovii (Common dodder) protein is Small ribosomal subunit protein uS11c.